The chain runs to 516 residues: Putative glucosylceramidase 2 (516 aa).

A signal peptide spans 1–23 (MSIAWSCFVLGLFALASLQVALA). Residue E254 is the Proton donor of the active site. E358 acts as the Nucleophile in catalysis.

This sequence belongs to the glycosyl hydrolase 30 family.

It catalyses the reaction a beta-D-glucosylceramide + H2O = an N-acyl-sphingoid base + D-glucose. It carries out the reaction a beta-D-glucosyl-(1&lt;-&gt;1')-N-acylsphing-4-enine + H2O = an N-acylsphing-4-enine + D-glucose. The catalysed reaction is an N-acyl-1-beta-D-glucosyl-15-methylhexadecasphing-4-enine + H2O = an N-acyl-15-methylhexadecasphing-4-enine + D-glucose. Its pathway is lipid metabolism; sphingolipid metabolism. Glucosylceramidase that catalyzes the hydrolysis of glucosylceramides into free ceramides and glucose. C.elegans contain specific sphingoid bases, which are unique or different in structure compared to the sphingoid bases found in other animals. Two examples of these distinctive compounds are: 15-methylhexadecasphinganine and 15-methylhexadecasphing-4-enine. The chain is Putative glucosylceramidase 2 (gba-2) from Caenorhabditis elegans.